Consider the following 491-residue polypeptide: Protein nucleotidyltransferase YdiU (491 aa).

Gly94, Gly96, Arg97, Lys117, Asp129, Gly130, Arg180, and Arg187 together coordinate ATP. Residue Asp256 is the Proton acceptor of the active site. Mg(2+) contacts are provided by Asn257 and Asp266. Asp266 is an ATP binding site.

Belongs to the SELO family. Requires Mg(2+) as cofactor. The cofactor is Mn(2+).

It carries out the reaction L-seryl-[protein] + ATP = 3-O-(5'-adenylyl)-L-seryl-[protein] + diphosphate. It catalyses the reaction L-threonyl-[protein] + ATP = 3-O-(5'-adenylyl)-L-threonyl-[protein] + diphosphate. The catalysed reaction is L-tyrosyl-[protein] + ATP = O-(5'-adenylyl)-L-tyrosyl-[protein] + diphosphate. The enzyme catalyses L-histidyl-[protein] + UTP = N(tele)-(5'-uridylyl)-L-histidyl-[protein] + diphosphate. It carries out the reaction L-seryl-[protein] + UTP = O-(5'-uridylyl)-L-seryl-[protein] + diphosphate. It catalyses the reaction L-tyrosyl-[protein] + UTP = O-(5'-uridylyl)-L-tyrosyl-[protein] + diphosphate. Its function is as follows. Nucleotidyltransferase involved in the post-translational modification of proteins. It can catalyze the addition of adenosine monophosphate (AMP) or uridine monophosphate (UMP) to a protein, resulting in modifications known as AMPylation and UMPylation. The polypeptide is Protein nucleotidyltransferase YdiU (Brevibacillus brevis (strain 47 / JCM 6285 / NBRC 100599)).